Here is a 348-residue protein sequence, read N- to C-terminus: MNGTEGPNFYVPFSNKTGVVRSPFEYPQYYLAEPWQFSMLAAYMFLLIVLGFPINFLTLYVTVQHKKLRTPLNYILLNLAVADLFMVFGGFTTTLYTSLHGYFVFGPTGCNLEGFFATLGGEIALWSLVVLAIERYVVVCKPMSNFRFGENHAIMGVAFTWVMALACAAPPLVGWSRYIPEGMQCSCGIDYYTLKPEVNNESFVIYMFVVHFTIPMIVIFFCYGQLVFTVKEAAAQQQESATTQKAEKEVTRMVIIMVIAFLICWVPYASVAFYIFTHQGSNFGPIFMTLPAFFAKSSSIYNPVIYIMMNKQFRNCMLTTLCCGKNPLGDDEASTTGSKTETSQVAPA.

Methionine 1 bears the N-acetylmethionine mark. The Extracellular segment spans residues 1 to 36 (MNGTEGPNFYVPFSNKTGVVRSPFEYPQYYLAEPWQ). 2 N-linked (GlcNAc...) asparagine glycosylation sites follow: asparagine 2 and asparagine 15. A helical membrane pass occupies residues 37 to 61 (FSMLAAYMFLLIVLGFPINFLTLYV). Residues 62-73 (TVQHKKLRTPLN) are Cytoplasmic-facing. The helical transmembrane segment at 74 to 96 (YILLNLAVADLFMVFGGFTTTLY) threads the bilayer. The Extracellular portion of the chain corresponds to 97-110 (TSLHGYFVFGPTGC). A disulfide bridge connects residues cysteine 110 and cysteine 187. The helical transmembrane segment at 111–133 (NLEGFFATLGGEIALWSLVVLAI) threads the bilayer. A 'Ionic lock' involved in activated form stabilization motif is present at residues 134-136 (ERY). Residues 134 to 152 (ERYVVVCKPMSNFRFGENH) are Cytoplasmic-facing. The chain crosses the membrane as a helical span at residues 153–173 (AIMGVAFTWVMALACAAPPLV). The Extracellular segment spans residues 174 to 202 (GWSRYIPEGMQCSCGIDYYTLKPEVNNES). Residue glutamate 201 participates in Zn(2+) binding. A helical membrane pass occupies residues 203-224 (FVIYMFVVHFTIPMIVIFFCYG). The Cytoplasmic segment spans residues 225–252 (QLVFTVKEAAAQQQESATTQKAEKEVTR). Residues 253–274 (MVIIMVIAFLICWVPYASVAFY) form a helical membrane-spanning segment. Over 275–286 (IFTHQGSNFGPI) the chain is Extracellular. Glutamine 279 contacts Zn(2+). Residues 287–308 (FMTLPAFFAKSSSIYNPVIYIM) traverse the membrane as a helical segment. Lysine 296 is modified (N6-(retinylidene)lysine). Over 309–348 (MNKQFRNCMLTTLCCGKNPLGDDEASTTGSKTETSQVAPA) the chain is Cytoplasmic. 2 S-palmitoyl cysteine lipidation sites follow: cysteine 322 and cysteine 323. An interaction with SAG region spans residues 330-348 (DDEASTTGSKTETSQVAPA). Serine 334 carries the post-translational modification Phosphoserine. Residues threonine 335 and threonine 336 each carry the phosphothreonine modification. Serine 338 carries the phosphoserine modification. A phosphothreonine mark is found at threonine 340 and threonine 342. Serine 343 is modified (phosphoserine).

Belongs to the G-protein coupled receptor 1 family. Opsin subfamily. In terms of assembly, homodimer. May form a complex composed of RHO, GRK1 and RCVRN in a Ca(2+)-dependent manner; RCVRN prevents the interaction between GRK1 and RHO. Interacts with GRK1. Interacts (phosphorylated form) with SAG. Interacts with GNAT1. Interacts with GNAT3. SAG and G-proteins compete for a common binding site. Interacts with PRCD; the interaction promotes PRCD stability. Forms a complex with ASAP1 and ARF4. Forms a complex with ASAP1, RAB11A, Rabin8/RAB3IP, ARF4 and RAB11FIP3; the complex regulates Golgi-to-cilia rhodopsin/RHO transport in photoreceptors. In terms of processing, phosphorylated on some or all of the serine and threonine residues present in the C-terminal region. Post-translationally, contains one covalently linked retinal chromophore. Upon light absorption, the covalently bound 11-cis-retinal is converted to all-trans-retinal. After hydrolysis of the Schiff base and release of the covalently bound all-trans-retinal, active rhodopsin is regenerated by binding of a fresh molecule of 11-cis-retinal.

It is found in the membrane. The protein localises to the cell projection. It localises to the cilium. The protein resides in the photoreceptor outer segment. Its function is as follows. Photoreceptor required for image-forming vision at low light intensity. Required for photoreceptor cell viability after birth. Light-induced isomerization of 11-cis to all-trans retinal triggers a conformational change that activates signaling via G-proteins. Subsequent receptor phosphorylation mediates displacement of the bound G-protein alpha subunit by the arrestin SAG and terminates signaling. The protein is Rhodopsin (RHO) of Felis catus (Cat).